The following is a 359-amino-acid chain: MKPSIYSLTRDELIAWAVERGQKQFRATQIWDWLYKKRVQSFEEMTNISKDFVPILNDSFCVNPLKQRVVQESADGTVKYLFELPDGMLIETVLMRQHYGHSVCVTTQVGCNIGCTFCASGLIKKQRDLNSGEITAQIMLVQKYFDDRKQGERVSHVVVMGIGEPFDNYKNVMCFLRVINDDNGLAIGARHITVSTSGLAHKIRDFANEGVQVNLAVSLHAPNNDLRSSIMRVNRSFPLEKLFSAIEYYIEKTNRRVTFEYIMLNEVNDSIKQAQELADLTKTIRKLSYVNLIPYNPVSEHDQYSRSPKERVLAFYDVLKKNGVNCVVRQEHGTDIDAACGQLRSKTMKKDREKVTATK.

Glu-91 functions as the Proton acceptor in the catalytic mechanism. Positions 97–329 (QHYGHSVCVT…KKNGVNCVVR (233 aa)) constitute a Radical SAM core domain. A disulfide bond links Cys-104 and Cys-340. The [4Fe-4S] cluster site is built by Cys-111, Cys-115, and Cys-118. Residues 163–164 (GE), Ser-195, 218–220 (SLH), and Asn-296 contribute to the S-adenosyl-L-methionine site. The S-methylcysteine intermediate role is filled by Cys-340.

This sequence belongs to the radical SAM superfamily. RlmN family. It depends on [4Fe-4S] cluster as a cofactor.

The protein resides in the cytoplasm. The enzyme catalyses adenosine(2503) in 23S rRNA + 2 reduced [2Fe-2S]-[ferredoxin] + 2 S-adenosyl-L-methionine = 2-methyladenosine(2503) in 23S rRNA + 5'-deoxyadenosine + L-methionine + 2 oxidized [2Fe-2S]-[ferredoxin] + S-adenosyl-L-homocysteine. The catalysed reaction is adenosine(37) in tRNA + 2 reduced [2Fe-2S]-[ferredoxin] + 2 S-adenosyl-L-methionine = 2-methyladenosine(37) in tRNA + 5'-deoxyadenosine + L-methionine + 2 oxidized [2Fe-2S]-[ferredoxin] + S-adenosyl-L-homocysteine. Specifically methylates position 2 of adenine 2503 in 23S rRNA and position 2 of adenine 37 in tRNAs. This Streptococcus pyogenes serotype M18 (strain MGAS8232) protein is Probable dual-specificity RNA methyltransferase RlmN.